A 426-amino-acid chain; its full sequence is Histidine--tRNA ligase (426 aa).

Belongs to the class-II aminoacyl-tRNA synthetase family. As to quaternary structure, homodimer.

It is found in the cytoplasm. The catalysed reaction is tRNA(His) + L-histidine + ATP = L-histidyl-tRNA(His) + AMP + diphosphate + H(+). This chain is Histidine--tRNA ligase, found in Streptococcus equi subsp. zooepidemicus (strain H70).